Here is a 425-residue protein sequence, read N- to C-terminus: 5-nitroanthranilic acid aminohydrolase (425 aa).

Asp88 is a catalytic residue. The Proton acceptor role is filled by Glu158.

This sequence belongs to the peptidase M20A family. Co(2+) serves as cofactor. The cofactor is Mn(2+). Requires Zn(2+) as cofactor. It depends on Fe(2+) as a cofactor. Ni(2+) is required as a cofactor.

It catalyses the reaction 5-nitroanthranilate + H2O + H(+) = 5-nitrosalicylate + NH4(+). Functionally, catalyzes the deamination of 5-nitroanthranilate (5NAA) to 5-nitrosalicylate (5NSA), the first step in biodegradation of 5-nitroanthranilate. This Bradyrhizobium sp protein is 5-nitroanthranilic acid aminohydrolase (naaA).